Consider the following 340-residue polypeptide: UPF0324 membrane protein BA_5405/GBAA_5405/BAS5024 (340 aa).

The next 10 membrane-spanning stretches (helical) occupy residues 13-35, 40-59, 99-118, 128-150, 157-179, 189-211, 218-240, 255-277, 279-301, and 316-338; these read FGFS…LAEL, IMGQ…AAIG, VLVI…YGLT, GILT…APQV, TAVG…TLLY, YGVF…APGG, AVIV…GVWF, LPIP…GIIP, VVAG…GLGL, and FVAG…YALG.

It belongs to the UPF0324 family.

Its subcellular location is the cell membrane. In Bacillus anthracis, this protein is UPF0324 membrane protein BA_5405/GBAA_5405/BAS5024.